The primary structure comprises 1063 residues: Kinesin-like protein KIN-7H (1063 aa).

In terms of domain architecture, Kinesin motor spans Lys-18–Val-342. Residue Gly-106–Thr-113 participates in ATP binding. Positions Val-351 to Thr-436 form a coiled coil. The disordered stretch occupies residues Ser-574 to Leu-664.

It belongs to the TRAFAC class myosin-kinesin ATPase superfamily. Kinesin family. KIN-7 subfamily.

The protein is Kinesin-like protein KIN-7H of Arabidopsis thaliana (Mouse-ear cress).